Reading from the N-terminus, the 365-residue chain is 3-dehydroquinate synthase (365 aa).

NAD(+) is bound by residues 69–74 (DGEAHK), 103–107 (GVIGD), 127–128 (TT), Lys140, and Lys149. The Zn(2+) site is built by Glu182, His245, and His262.

It belongs to the sugar phosphate cyclases superfamily. Dehydroquinate synthase family. It depends on Co(2+) as a cofactor. The cofactor is Zn(2+). Requires NAD(+) as cofactor.

The protein localises to the cytoplasm. The enzyme catalyses 7-phospho-2-dehydro-3-deoxy-D-arabino-heptonate = 3-dehydroquinate + phosphate. Its pathway is metabolic intermediate biosynthesis; chorismate biosynthesis; chorismate from D-erythrose 4-phosphate and phosphoenolpyruvate: step 2/7. Functionally, catalyzes the conversion of 3-deoxy-D-arabino-heptulosonate 7-phosphate (DAHP) to dehydroquinate (DHQ). The chain is 3-dehydroquinate synthase from Pseudomonas putida (strain ATCC 700007 / DSM 6899 / JCM 31910 / BCRC 17059 / LMG 24140 / F1).